A 320-amino-acid chain; its full sequence is Serpentine receptor class delta-28 (320 aa).

Transmembrane regions (helical) follow at residues 5-25, 38-58, 83-103, 122-142, 176-196, 230-250, and 258-278; these read LLHT…MYLA, AIIT…FFVM, ACYI…IWMI, SLVF…ATWI, LTLI…YAWI, FLPS…TQLI, and LVSV…ILFV.

This sequence belongs to the nematode receptor-like protein srd family.

The protein resides in the membrane. The sequence is that of Serpentine receptor class delta-28 (srd-28) from Caenorhabditis elegans.